We begin with the raw amino-acid sequence, 192 residues long: uncharacterized protein (192 aa).

The tract at residues 71–100 (NNVLPEPSKPNNPVVNPPVSPIQPKTDPEQ) is disordered. A compositionally biased stretch (pro residues) spans 77–91 (PSKPNNPVVNPPVSP).

This is an uncharacterized protein from Caenorhabditis elegans.